The chain runs to 428 residues: Tyrosine--tRNA ligase (428 aa).

Tyr-41 contacts L-tyrosine. A 'HIGH' region motif is present at residues 46-55 (PTADSLHLGH). 2 residues coordinate L-tyrosine: Tyr-179 and Gln-183. Residues 239 to 243 (KFGKT) carry the 'KMSKS' region motif. Residue Lys-242 participates in ATP binding. The 58-residue stretch at 361–418 (ADLMQALVDSELQPSRGQARKTIASNAITINGEKQSDPEYTFSDSDRLFGRYTLLRRG) folds into the S4 RNA-binding domain.

It belongs to the class-I aminoacyl-tRNA synthetase family. TyrS type 1 subfamily. Homodimer.

The protein localises to the cytoplasm. It catalyses the reaction tRNA(Tyr) + L-tyrosine + ATP = L-tyrosyl-tRNA(Tyr) + AMP + diphosphate + H(+). Catalyzes the attachment of tyrosine to tRNA(Tyr) in a two-step reaction: tyrosine is first activated by ATP to form Tyr-AMP and then transferred to the acceptor end of tRNA(Tyr). The polypeptide is Tyrosine--tRNA ligase (Cronobacter sakazakii (strain ATCC BAA-894) (Enterobacter sakazakii)).